We begin with the raw amino-acid sequence, 346 residues long: tRNA N6-adenosine threonylcarbamoyltransferase (346 aa).

Fe cation is bound by residues H111 and H115. Substrate-binding positions include 134 to 138, D167, G180, and N279; that span reads LVSGG. Position 307 (D307) interacts with Fe cation.

This sequence belongs to the KAE1 / TsaD family. Requires Fe(2+) as cofactor.

Its subcellular location is the cytoplasm. It catalyses the reaction L-threonylcarbamoyladenylate + adenosine(37) in tRNA = N(6)-L-threonylcarbamoyladenosine(37) in tRNA + AMP + H(+). In terms of biological role, required for the formation of a threonylcarbamoyl group on adenosine at position 37 (t(6)A37) in tRNAs that read codons beginning with adenine. Is involved in the transfer of the threonylcarbamoyl moiety of threonylcarbamoyl-AMP (TC-AMP) to the N6 group of A37, together with TsaE and TsaB. TsaD likely plays a direct catalytic role in this reaction. The sequence is that of tRNA N6-adenosine threonylcarbamoyltransferase from Burkholderia cenocepacia (strain HI2424).